A 453-amino-acid polypeptide reads, in one-letter code: o-phthalyl amidase (453 aa).

Monomer. In terms of processing, the N-terminus is blocked.

It carries out the reaction a phtalamide + H2O = phthalate + a primary amine. With respect to regulation, inhibited by iodoacetate, p-hydroxymercuric benzoate and copper ions. In terms of biological role, catalyzes the removal of the phthalyl group from phthalyl amides generating phthalate and an amine. The enzyme has a broad substrate specificity and hydrolyzes phthalylated amino acids, peptides, beta-lactams, aromatic and aliphatic amines; substitutions allowed on the phthalyl group include 6-F, 6-NH(2), 3-OH, and a nitrogen in the aromatic ring ortho to the carboxy group attached to the amine. This chain is o-phthalyl amidase, found in Xanthobacter agilis.